The chain runs to 894 residues: Tyrosine-protein kinase receptor UFO (894 aa).

An N-terminal signal peptide occupies residues 1 to 25 (MAWRCPRMGRVPLAWCLALCGWACM). Residues 26-92 (APRGTQAEES…QTQVPLGEDE (67 aa)) form an interaction with GAS6 region. Over 26 to 451 (APRGTQAEES…STPAFSWPWW (426 aa)) the chain is Extracellular. 2 consecutive Ig-like C2-type domains span residues 27-128 (PRGT…TFVS) and 139-222 (PYFL…ATIT). Asn-43 carries N-linked (GlcNAc...) asparagine glycosylation. An intrachain disulfide couples Cys-56 to Cys-117. N-linked (GlcNAc...) asparagine glycosylation is found at Asn-157 and Asn-198. A disulfide bridge connects residues Cys-160 and Cys-205. 2 consecutive Fibronectin type-III domains span residues 227–331 (QPRN…TPEG) and 336–428 (PPEN…AWRP). N-linked (GlcNAc...) asparagine glycans are attached at residues Asn-339, Asn-345, and Asn-401. Residues 452 to 472 (YVLLGAVVAAACVLILALFLV) form a helical membrane-spanning segment. The Cytoplasmic portion of the chain corresponds to 473 to 894 (HRRKKETRYG…PAAPGQEDGA (422 aa)). Positions 536-807 (VALGKTLGEG…ELREDLENTL (272 aa)) constitute a Protein kinase domain. Residues 542 to 550 (LGEGEFGAV) and Lys-567 each bind ATP. Residue Asp-672 is the Proton acceptor of the active site. Phosphotyrosine; by autocatalysis is present on residues Tyr-703, Tyr-779, and Tyr-821. Disordered stretches follow at residues 823–853 (NMDE…DSCS) and 866–894 (YVLC…EDGA). Position 866 is a phosphotyrosine; by autocatalysis (Tyr-866). Ser-884 is subject to Phosphoserine.

The protein belongs to the protein kinase superfamily. Tyr protein kinase family. AXL/UFO subfamily. In terms of assembly, heterodimer and heterotetramer with ligand GAS6. Interacts with CBL, GRB2, LCK, NCK2, PIK3R1, PIK3R2, PIK3R3, PLCG1, SOCS1 and TNS2. Part of a complex including AXL, TNK2 and GRB2, in which GRB2 promotes AXL recruitment by TNK2. Monoubiquitinated upon GAS6-binding. A very small proportion of the receptor could be subjected to polyubiquitination in a very transient fashion. In terms of processing, phosphorylated at tyrosine residues by autocatalysis, which activates kinase activity. As to expression, highly expressed in metastatic colon tumors. Expressed in primary colon tumors. Weakly expressed in normal colon tissue.

The protein localises to the cell membrane. The enzyme catalyses L-tyrosyl-[protein] + ATP = O-phospho-L-tyrosyl-[protein] + ADP + H(+). Activated by GAS6-binding and subsequent autophosphorylation. In terms of biological role, receptor tyrosine kinase that transduces signals from the extracellular matrix into the cytoplasm by binding growth factor GAS6 and which is thus regulating many physiological processes including cell survival, cell proliferation, migration and differentiation. Ligand binding at the cell surface induces dimerization and autophosphorylation of AXL. Following activation by ligand, AXL binds and induces tyrosine phosphorylation of PI3-kinase subunits PIK3R1, PIK3R2 and PIK3R3; but also GRB2, PLCG1, LCK and PTPN11. Other downstream substrate candidates for AXL are CBL, NCK2, SOCS1 and TNS2. Recruitment of GRB2 and phosphatidylinositol 3 kinase regulatory subunits by AXL leads to the downstream activation of the AKT kinase. GAS6/AXL signaling plays a role in various processes such as endothelial cell survival during acidification by preventing apoptosis, optimal cytokine signaling during human natural killer cell development, hepatic regeneration, gonadotropin-releasing hormone neuron survival and migration, platelet activation, or regulation of thrombotic responses. Also plays an important role in inhibition of Toll-like receptors (TLRs)-mediated innate immune response. Its function is as follows. (Microbial infection) Acts as a receptor for lassa virus and lymphocytic choriomeningitis virus, possibly through GAS6 binding to phosphatidyl-serine at the surface of virion envelope. (Microbial infection) Acts as a receptor for Ebolavirus, possibly through GAS6 binding to phosphatidyl-serine at the surface of virion envelope. Functionally, (Microbial infection) Promotes Zika virus entry in glial cells, Sertoli cells and astrocytes. Additionally, Zika virus potentiates AXL kinase activity to antagonize type I interferon signaling and thereby promotes infection. Interferon signaling inhibition occurs via an SOCS1-dependent mechanism. The sequence is that of Tyrosine-protein kinase receptor UFO (AXL) from Homo sapiens (Human).